Consider the following 250-residue polypeptide: 5'-nucleotidase SurE (250 aa).

A divalent metal cation is bound by residues aspartate 9, aspartate 10, serine 40, and asparagine 92.

The protein belongs to the SurE nucleotidase family. The cofactor is a divalent metal cation.

The protein localises to the cytoplasm. The enzyme catalyses a ribonucleoside 5'-phosphate + H2O = a ribonucleoside + phosphate. In terms of biological role, nucleotidase that shows phosphatase activity on nucleoside 5'-monophosphates. This is 5'-nucleotidase SurE from Idiomarina loihiensis (strain ATCC BAA-735 / DSM 15497 / L2-TR).